The primary structure comprises 484 residues: 1,3-beta-glucanosyltransferase GAS5 (484 aa).

Residues 1 to 19 (MLLRSLTSAFVLSAGLAQA) form the signal peptide. Asparagine 24 and asparagine 60 each carry an N-linked (GlcNAc...) asparagine glycan. A disulfide bridge links cysteine 71 with cysteine 100. Residues tyrosine 89, asparagine 159, and glutamate 160 each coordinate (1,3-beta-D-glucosyl)n. Residue glutamate 160 is the Proton donor of the active site. Asparagine 166 is a glycosylation site (N-linked (GlcNAc...) asparagine). Residues aspartate 201 and arginine 206 each contribute to the (1,3-beta-D-glucosyl)n site. 2 disulfide bridges follow: cysteine 215-cysteine 348 and cysteine 234-cysteine 265. Glutamate 262 acts as the Nucleophile in catalysis. (1,3-beta-D-glucosyl)n is bound at residue tyrosine 295. N-linked (GlcNAc...) asparagine glycans are attached at residues asparagine 299, asparagine 344, and asparagine 359. The interval 383–462 (TGIATQQSCD…SSQSSSKSKG (80 aa)) is disordered. Positions 394 to 404 (KDDDDEEDDDT) are enriched in acidic residues. Residues 405 to 462 (SSSSSSSSSSSSSASSSSESSSSTSKASSSSPSASETSLLKSAASATSSSQSSSKSKG) show a composition bias toward low complexity. The GPI-anchor amidated glycine moiety is linked to residue glycine 462. A propeptide spans 463–484 (AAGIIEIPLIFRALAELYNLVL) (removed in mature form).

This sequence belongs to the glycosyl hydrolase 72 family. In terms of processing, the GPI-anchor is attached to the protein in the endoplasmic reticulum and serves to target the protein to the cell surface. There, the glucosamine-inositol phospholipid moiety is cleaved off and the GPI-modified mannoprotein is covalently attached via its lipidless GPI glycan remnant to the 1,6-beta-glucan of the outer cell wall layer.

It localises to the secreted. It is found in the cell wall. Its subcellular location is the membrane. Functionally, splits internally a 1,3-beta-glucan molecule and transfers the newly generated reducing end (the donor) to the non-reducing end of another 1,3-beta-glucan molecule (the acceptor) forming a 1,3-beta linkage, resulting in the elongation of 1,3-beta-glucan chains in the cell wall. Involved in cell wall biosynthesis and morphogenesis. The protein is 1,3-beta-glucanosyltransferase GAS5 (GAS5) of Saccharomyces cerevisiae (strain ATCC 204508 / S288c) (Baker's yeast).